We begin with the raw amino-acid sequence, 89 residues long: Small ribosomal subunit protein uS15 (89 aa).

This sequence belongs to the universal ribosomal protein uS15 family. Part of the 30S ribosomal subunit. Forms a bridge to the 50S subunit in the 70S ribosome, contacting the 23S rRNA.

Its function is as follows. One of the primary rRNA binding proteins, it binds directly to 16S rRNA where it helps nucleate assembly of the platform of the 30S subunit by binding and bridging several RNA helices of the 16S rRNA. Forms an intersubunit bridge (bridge B4) with the 23S rRNA of the 50S subunit in the ribosome. The chain is Small ribosomal subunit protein uS15 from Pasteurella multocida (strain Pm70).